The sequence spans 671 residues: Gametogenetin-binding protein 2-like (671 aa).

Disordered stretches follow at residues 372–489 (REQK…ARVQ) and 532–562 (VRDSGYGSDPPSHAGSRTSSAISSPEGSEVS). Over residues 373–384 (EQKKLKKKKKKD) the composition is skewed to basic residues. Positions 385-395 (EKKNLLHRQCD) are enriched in basic and acidic residues. Over residues 396–420 (DTEANESDEEEEELRNEELDLEEES) the composition is skewed to acidic residues. Basic residues predominate over residues 455–472 (TKSKPKKQSKKKKQKKAA). Composition is skewed to polar residues over residues 476–486 (MGNQKQMQATA) and 546–557 (GSRTSSAISSPE).

The polypeptide is Gametogenetin-binding protein 2-like (Drosophila melanogaster (Fruit fly)).